We begin with the raw amino-acid sequence, 405 residues long: Probable glucan 1,3-beta-glucosidase A (405 aa).

A signal peptide spans Met-1–Ala-26. Residue Glu-198 is the Proton donor of the active site. 2 cysteine pairs are disulfide-bonded: Cys-278/Cys-403 and Cys-304/Cys-330. Glu-296 acts as the Nucleophile in catalysis.

Belongs to the glycosyl hydrolase 5 (cellulase A) family. In terms of assembly, monomer. The cofactor is Mn(2+).

It is found in the secreted. It carries out the reaction Successive hydrolysis of beta-D-glucose units from the non-reducing ends of (1-&gt;3)-beta-D-glucans, releasing alpha-glucose.. In terms of biological role, beta-glucanases participate in the metabolism of beta-glucan, the main structural component of the cell wall. It could also function biosynthetically as a transglycosylase. The protein is Probable glucan 1,3-beta-glucosidase A (exgA) of Emericella nidulans (strain FGSC A4 / ATCC 38163 / CBS 112.46 / NRRL 194 / M139) (Aspergillus nidulans).